The following is a 95-amino-acid chain: Co-chaperonin GroES (95 aa).

It belongs to the GroES chaperonin family. Heptamer of 7 subunits arranged in a ring. Interacts with the chaperonin GroEL.

The protein localises to the cytoplasm. Together with the chaperonin GroEL, plays an essential role in assisting protein folding. The GroEL-GroES system forms a nano-cage that allows encapsulation of the non-native substrate proteins and provides a physical environment optimized to promote and accelerate protein folding. GroES binds to the apical surface of the GroEL ring, thereby capping the opening of the GroEL channel. The sequence is that of Co-chaperonin GroES from Xylella fastidiosa (strain M12).